Reading from the N-terminus, the 296-residue chain is MPWIQLRLNTTGQLAESLGDALMENGAVSVTFQDSHDNPVFEPLPGETRLWGDTDVIGLYDAETDMKAVISQLEQVPELGERFIHKIEQLEDKDWEREWMDNFHPMRFGNRLWICPSWRDVPDPDAVNVMLDPGLAFGTGTHPTTSLCLQWLDSLNLEGKTVIDFGCGSGILAIAALKLGATHAIGIDIDPQAIQASRDNAERNGVLEHLTLYLAKNTPTDLESDVVIANILAGPLRELAPVIGALPKPGGLLGLSGILTNQAESVIQAYTDKFVIDPVAEREEWCRISGVKIATN.

S-adenosyl-L-methionine-binding residues include Thr-145, Gly-166, Asp-188, and Asn-230.

It belongs to the methyltransferase superfamily. PrmA family.

Its subcellular location is the cytoplasm. It catalyses the reaction L-lysyl-[protein] + 3 S-adenosyl-L-methionine = N(6),N(6),N(6)-trimethyl-L-lysyl-[protein] + 3 S-adenosyl-L-homocysteine + 3 H(+). Methylates ribosomal protein L11. The protein is Ribosomal protein L11 methyltransferase of Photorhabdus laumondii subsp. laumondii (strain DSM 15139 / CIP 105565 / TT01) (Photorhabdus luminescens subsp. laumondii).